A 645-amino-acid polypeptide reads, in one-letter code: MKFQLVTHFQPAGDQPQAIDSLVAGLNDNKRDQVLLGVTGSGKTFTMANVIARTNRPALIIAHNKTLAAQLYEEMKGFFPHNAVEYFISYYDYYQPEAYLPQTDTYIEKDSVINERIDMLRYSAVCSLLERRDTIVVASVSCIYGLGSPESYLSMTITLSTGDRIRINDFLNDLANLQYKRSDIRFERGYFRMRGDVIDIFPAYYEDKAWRLLLIGNEIEGISEINAITGNIIKCIDKITIFPNSYHITSRETLLRAVQPIREELNERLDYYYSQNKIVEAQRLEQRTNFDIEMMVATGTCKGIENYSRYLYGMEAGDAPPTLFEYLPEDVILFVDESHVTVPQIGAMYNGNESRKKKLIDHGFRLPSAFDNRPLKFKEWESMRPQTIYISATPGKYELARTNNLFVEQVIRPTGITDPICIVKPAEAQVYDVVHEAQVTIKRGFCVLITTLTKKMAEKLAEHMSELNMKVSYLHSDISALERIDIVYKLRSKEIDVLIGVNLLREGLDIPECGLVAILDADKEGFLRSETSLIQTIGRAARNAESRAILYADKVTGSMDRALKETERRRKKQKKYSVLHNVLPKTIIKPISNTLKEKVVVKVTTIGMNKDTVSSLRKQMLAHAKNLEFEEAAKIKNIIGRINNL.

The 391-residue stretch at 24 to 414 (AGLNDNKRDQ…LFVEQVIRPT (391 aa)) folds into the Helicase ATP-binding domain. Residue 37–44 (GVTGSGKT) participates in ATP binding. The Beta-hairpin signature appears at 90–113 (YYDYYQPEAYLPQTDTYIEKDSVI). Residues 426 to 591 (AEAQVYDVVH…VLPKTIIKPI (166 aa)) enclose the Helicase C-terminal domain. The UVR domain maps to 610–645 (KDTVSSLRKQMLAHAKNLEFEEAAKIKNIIGRINNL).

Belongs to the UvrB family. Forms a heterotetramer with UvrA during the search for lesions. Interacts with UvrC in an incision complex.

It is found in the cytoplasm. Functionally, the UvrABC repair system catalyzes the recognition and processing of DNA lesions. A damage recognition complex composed of 2 UvrA and 2 UvrB subunits scans DNA for abnormalities. Upon binding of the UvrA(2)B(2) complex to a putative damaged site, the DNA wraps around one UvrB monomer. DNA wrap is dependent on ATP binding by UvrB and probably causes local melting of the DNA helix, facilitating insertion of UvrB beta-hairpin between the DNA strands. Then UvrB probes one DNA strand for the presence of a lesion. If a lesion is found the UvrA subunits dissociate and the UvrB-DNA preincision complex is formed. This complex is subsequently bound by UvrC and the second UvrB is released. If no lesion is found, the DNA wraps around the other UvrB subunit that will check the other stand for damage. The chain is UvrABC system protein B from Wolbachia sp. subsp. Brugia malayi (strain TRS).